Consider the following 70-residue polypeptide: Cold shock-like protein CspI (70 aa).

Residues 7 to 67 enclose the CSD domain; it reads GLVKWFNPEK…GPKGPAAVHV (61 aa).

It is found in the cytoplasm. This Escherichia coli O6:H1 (strain CFT073 / ATCC 700928 / UPEC) protein is Cold shock-like protein CspI (cspI).